Consider the following 264-residue polypeptide: tRNA-uridine aminocarboxypropyltransferase A (264 aa).

Cysteine 25, cysteine 28, cysteine 35, and cysteine 37 together coordinate Zn(2+). Positions 144–147 (DATW) match the DXTW motif. The disordered stretch occupies residues 245 to 264 (RPKLLKKRFQNQQPLEQEEE). Residues 254 to 264 (QNQQPLEQEEE) are compositionally biased toward polar residues.

Belongs to the TDD superfamily. DTWD2 family.

The enzyme catalyses a uridine in tRNA + S-adenosyl-L-methionine = a 3-[(3S)-3-amino-3-carboxypropyl]uridine in tRNA + S-methyl-5'-thioadenosine + H(+). Its function is as follows. Catalyzes the formation of 3-(3-amino-3-carboxypropyl)uridine (acp3U) at position 20a in the D-loop of several cytoplasmic tRNAs (acp3U(20a)). The sequence is that of tRNA-uridine aminocarboxypropyltransferase A from Arabidopsis thaliana (Mouse-ear cress).